The primary structure comprises 328 residues: YDG domain-containing protein At5g47150 (328 aa).

The region spanning 176–320 (GSVPGINIGD…KSVYKFKLCR (145 aa)) is the YDG domain.

It is found in the nucleus. The protein is YDG domain-containing protein At5g47150 of Arabidopsis thaliana (Mouse-ear cress).